The following is a 182-amino-acid chain: Ribosome-recycling factor (182 aa).

The protein belongs to the RRF family.

It localises to the cytoplasm. In terms of biological role, responsible for the release of ribosomes from messenger RNA at the termination of protein biosynthesis. May increase the efficiency of translation by recycling ribosomes from one round of translation to another. The chain is Ribosome-recycling factor from Nostoc punctiforme (strain ATCC 29133 / PCC 73102).